Reading from the N-terminus, the 355-residue chain is MISKQQISEIISNYDLNDLAIATVCSHSSLQIFDGARKEGLRTIGICVGQPPRFYDAFPKAKPDEYIVVESYSDIPKIAEELVRKNAIVIPHGSFVEYMGTESFAELAVPTFGNREVLEWESDRDKEREWLEGAGIHMPKIVDPEKIESPVMVKYHGAKGGRGFFIAKDYEEFKQYIDPNEKHTVQEFIVGTRYYLHFFYSPIREEGYKLSEGILEMLSMDRRVESNADEIFRLGSPKELEDAGIHPTYVVTGNVPLVARESLLPRIFALGEKVVEESLGLFGGMIGPFCLETVFTDKLEIKVFEISARIVAGTNLYTSGSPYSDMIEENLSTGKRIAQEIKLGAKTGKLDLILS.

5-amino-1-(5-phospho-beta-D-ribosyl)imidazole-4-carboxamide-binding residues include H27 and S94. Residues 101–332 form the ATP-grasp domain; sequence TESFAELAVP…YSDMIEENLS (232 aa). ATP is bound by residues 144 to 195 and E225; that span reads PEKI…TRYY. N254 is a binding site for 5-amino-1-(5-phospho-beta-D-ribosyl)imidazole-4-carboxamide. Residues E292 and E305 each contribute to the Mg(2+) site.

The protein belongs to the phosphohexose mutase family. Mg(2+) serves as cofactor. The cofactor is Mn(2+).

The catalysed reaction is 5-amino-1-(5-phospho-beta-D-ribosyl)imidazole-4-carboxamide + formate + ATP = 5-formamido-1-(5-phospho-D-ribosyl)imidazole-4-carboxamide + ADP + phosphate. It participates in purine metabolism; IMP biosynthesis via de novo pathway; 5-formamido-1-(5-phospho-D-ribosyl)imidazole-4-carboxamide from 5-amino-1-(5-phospho-D-ribosyl)imidazole-4-carboxamide (formate route): step 1/1. Catalyzes the ATP- and formate-dependent formylation of 5-aminoimidazole-4-carboxamide-1-beta-d-ribofuranosyl 5'-monophosphate (AICAR) to 5-formaminoimidazole-4-carboxamide-1-beta-d-ribofuranosyl 5'-monophosphate (FAICAR) in the absence of folates. This Methanococcoides burtonii (strain DSM 6242 / NBRC 107633 / OCM 468 / ACE-M) protein is 5-formaminoimidazole-4-carboxamide-1-(beta)-D-ribofuranosyl 5'-monophosphate synthetase.